Consider the following 103-residue polypeptide: Thioredoxin-1 (103 aa).

The Thioredoxin domain occupies 2 to 103; sequence VKQVSDSSEF…KLEASIKANL (102 aa). Residues Cys30 and Cys33 each act as nucleophile in the active site. A disulfide bridge links Cys30 with Cys33.

It belongs to the thioredoxin family.

Participates in various redox reactions through the reversible oxidation of its active center dithiol to a disulfide and catalyzes dithiol-disulfide exchange reactions. The polypeptide is Thioredoxin-1 (trx1) (Schizosaccharomyces pombe (strain 972 / ATCC 24843) (Fission yeast)).